The following is a 393-amino-acid chain: Branched-chain-amino-acid aminotransferase, mitochondrial (393 aa).

The N-terminal 16 residues, 1–16 (MLQRHSLKLGKFSIRT), are a transit peptide targeting the mitochondrion. Position 219 is an N6-(pyridoxal phosphate)lysine (lysine 219). Phosphothreonine is present on threonine 315.

Belongs to the class-IV pyridoxal-phosphate-dependent aminotransferase family. The cofactor is pyridoxal 5'-phosphate.

Its subcellular location is the mitochondrion matrix. It catalyses the reaction L-leucine + 2-oxoglutarate = 4-methyl-2-oxopentanoate + L-glutamate. It carries out the reaction L-isoleucine + 2-oxoglutarate = (S)-3-methyl-2-oxopentanoate + L-glutamate. The catalysed reaction is L-valine + 2-oxoglutarate = 3-methyl-2-oxobutanoate + L-glutamate. The enzyme catalyses a 2-oxocarboxylate + L-methionine = 4-methylsulfanyl-2-oxobutanoate + an L-alpha-amino acid. The protein operates within amino-acid biosynthesis; L-isoleucine biosynthesis; L-isoleucine from 2-oxobutanoate: step 4/4. It participates in amino-acid biosynthesis; L-leucine biosynthesis; L-leucine from 3-methyl-2-oxobutanoate: step 4/4. Its pathway is amino-acid biosynthesis; L-valine biosynthesis; L-valine from pyruvate: step 4/4. It functions in the pathway amino-acid biosynthesis; L-methionine biosynthesis via salvage pathway; L-methionine from S-methyl-5-thio-alpha-D-ribose 1-phosphate: step 6/6. Mitochondrial isozyme of branched-chain-amino-acid aminotransferase, involved in the biosynthesis of the branched chain amino acids (BCAAs) leucine, isoleucine, and valine. Catalyzes the formation of methionine from 2-keto-4-methylthiobutyrate (KMTB) in the methionine salvage pathway primarily using BCAAs (leucine, isoleucine, and valine) as the amino donors. Appears to be involved in the regulation of the cell cycle, although this may be indirect via metabolic changes. Connects BCAAs and TCA-cycle metabolism governing TCA-cycle flux to activate TORC1 signaling. High copy suppressor of a temperature-sensitive mutation in the ABC transporter, ATM1. The sequence is that of Branched-chain-amino-acid aminotransferase, mitochondrial from Saccharomyces cerevisiae (strain ATCC 204508 / S288c) (Baker's yeast).